The chain runs to 263 residues: N-acyl homoserine lactonase AttM (263 aa).

The Zn(2+) site is built by His103, His105, Asp107, His108, His180, Asp202, and His247.

The protein belongs to the metallo-beta-lactamase superfamily. Zn(2+) is required as a cofactor.

The enzyme catalyses an N-acyl-L-homoserine lactone + H2O = an N-acyl-L-homoserine + H(+). In Rhizobium johnstonii (strain DSM 114642 / LMG 32736 / 3841) (Rhizobium leguminosarum bv. viciae), this protein is N-acyl homoserine lactonase AttM.